The primary structure comprises 372 residues: MAEQETTSNINTINDQAEEETRTKSQPLISGLPNDIAELCLLRLPYPYHALYRSVSSSWNKTITNPRFLFSKQSLSISSPYLFVFAFNKSTARIQWQSLDLASGRWFVLPPMPNSFTKISSPHALSCASMPRQGKLFVLGGGDVNRSAVVYTALTNRWSCISPMMSPRTYFVSGNVNGKIMAVGGSVGGNGEATTEVESYDPDNDTWTVVKKLPMVLAKYDSAVIGKEMCVTEGWAWPFMFPPMGQVYDSDEGTWREMSGGMKEGWTGVSVVIRDRLFVISEHGDFPMKVYCSDDDTWRYVSGEKLQGEKMRRPFAVTGADDRVFVVASGINVAEGRVSEGQNGDFSVEWRMVSSPKSSIQFSPASCHVLYV.

The segment covering 1–15 has biased composition (polar residues); the sequence is MAEQETTSNINTIND. Residues 1–27 form a disordered region; the sequence is MAEQETTSNINTINDQAEEETRTKSQP. Residues 29 to 74 enclose the F-box domain; the sequence is ISGLPNDIAELCLLRLPYPYHALYRSVSSSWNKTITNPRFLFSKQS. Kelch repeat units follow at residues 80-126, 135-178, 179-227, 229-276, and 279-325; these read PYLF…HALS, KLFV…NVNG, KIMA…VIGK, MCVT…IRDR, and VISE…DRVF.

Part of a SCF (ASK-cullin-F-box) protein ligase complex. Interacts with SKP1A.

It functions in the pathway protein modification; protein ubiquitination. In terms of biological role, component of SCF (ASK-cullin-F-box) E3 ubiquitin ligase complexes, which may mediate the ubiquitination and subsequent proteasomal degradation of target proteins. Part of the phyA-mediated signaling transduction pathway leading to the regulation of gene expression and hypocotyls elongation in response to red and far-red light exposure. The protein is F-box protein AFR (AFR) of Arabidopsis thaliana (Mouse-ear cress).